Reading from the N-terminus, the 47-residue chain is LQANRQYLFQGSLKPGPELPEEMKQGLPFLGQPDGQGRFPLRYQGRI.

The protein belongs to the GSP N family.

Its subcellular location is the cell inner membrane. Involved in a type II secretion system (T2SS, formerly general secretion pathway, GSP) for the export of proteins. In Aeromonas salmonicida, this protein is Type II secretion system protein N (exeN).